A 950-amino-acid polypeptide reads, in one-letter code: Bifunctional glutamine synthetase adenylyltransferase/adenylyl-removing enzyme (950 aa).

An adenylyl removase region spans residues 1 to 440; the sequence is MLPLPSELQI…VFDHLIGDDA (440 aa). The segment at 449 to 950 is adenylyl transferase; sequence HGLYKSLWQD…KWLVAAPSDV (502 aa).

It belongs to the GlnE family. Requires Mg(2+) as cofactor.

The catalysed reaction is [glutamine synthetase]-O(4)-(5'-adenylyl)-L-tyrosine + phosphate = [glutamine synthetase]-L-tyrosine + ADP. The enzyme catalyses [glutamine synthetase]-L-tyrosine + ATP = [glutamine synthetase]-O(4)-(5'-adenylyl)-L-tyrosine + diphosphate. Involved in the regulation of glutamine synthetase GlnA, a key enzyme in the process to assimilate ammonia. When cellular nitrogen levels are high, the C-terminal adenylyl transferase (AT) inactivates GlnA by covalent transfer of an adenylyl group from ATP to specific tyrosine residue of GlnA, thus reducing its activity. Conversely, when nitrogen levels are low, the N-terminal adenylyl removase (AR) activates GlnA by removing the adenylyl group by phosphorolysis, increasing its activity. The regulatory region of GlnE binds the signal transduction protein PII (GlnB) which indicates the nitrogen status of the cell. The polypeptide is Bifunctional glutamine synthetase adenylyltransferase/adenylyl-removing enzyme (Yersinia enterocolitica serotype O:8 / biotype 1B (strain NCTC 13174 / 8081)).